We begin with the raw amino-acid sequence, 307 residues long: Homoserine kinase (307 aa).

An ATP-binding site is contributed by 85–95 (PLTRGLGSSAA).

Belongs to the GHMP kinase family. Homoserine kinase subfamily.

The protein localises to the cytoplasm. The catalysed reaction is L-homoserine + ATP = O-phospho-L-homoserine + ADP + H(+). The protein operates within amino-acid biosynthesis; L-threonine biosynthesis; L-threonine from L-aspartate: step 4/5. Catalyzes the ATP-dependent phosphorylation of L-homoserine to L-homoserine phosphate. The sequence is that of Homoserine kinase from Caldicellulosiruptor bescii (strain ATCC BAA-1888 / DSM 6725 / KCTC 15123 / Z-1320) (Anaerocellum thermophilum).